A 620-amino-acid chain; its full sequence is Kelch-like protein 8 (620 aa).

The segment covering 1–10 has biased composition (polar residues); sequence MASDSMSSKQ. Residues 1–35 form a disordered region; sequence MASDSMSSKQARNHITKGKRQQQHQQIKNRSSISD. Residue alanine 2 is modified to N-acetylalanine. Basic residues predominate over residues 11–22; the sequence is ARNHITKGKRQQ. A compositionally biased stretch (polar residues) spans 23-34; it reads QHQQIKNRSSIS. The 68-residue stretch at 67-134 folds into the BTB domain; that stretch reads CDVTLKVGSK…VYSSRLTLTV (68 aa). In terms of domain architecture, BACK spans 169 to 270; that stretch reads CLAVRAFAES…LPVDFLMGVV (102 aa). 6 Kelch repeats span residues 319–366, 367–413, 415–460, 462–507, 508–554, and 556–601; these read VLFC…SVEG, KVYA…SLGG, IYAI…ALVN, VYAV…KLHG, CLYV…TVMG, and IFAV…VCSC.

In terms of assembly, component of the BCR(KLHL8) E3 ubiquitin ligase complex, at least composed of CUL3, KLHL8 and RBX1. Interacts with RAPSN.

It functions in the pathway protein modification; protein ubiquitination. Its function is as follows. Substrate-specific adapter of a BCR (BTB-CUL3-RBX1) E3 ubiquitin ligase complex required for The BCR(KLHL8) ubiquitin ligase complex mediates ubiquitination and degradation of RAPSN. This Homo sapiens (Human) protein is Kelch-like protein 8 (KLHL8).